We begin with the raw amino-acid sequence, 346 residues long: N-acetyl-gamma-glutamyl-phosphate reductase (346 aa).

The active site involves Cys-149.

It belongs to the NAGSA dehydrogenase family. Type 1 subfamily.

The protein localises to the cytoplasm. It carries out the reaction N-acetyl-L-glutamate 5-semialdehyde + phosphate + NADP(+) = N-acetyl-L-glutamyl 5-phosphate + NADPH + H(+). It functions in the pathway amino-acid biosynthesis; L-arginine biosynthesis; N(2)-acetyl-L-ornithine from L-glutamate: step 3/4. Functionally, catalyzes the NADPH-dependent reduction of N-acetyl-5-glutamyl phosphate to yield N-acetyl-L-glutamate 5-semialdehyde. This chain is N-acetyl-gamma-glutamyl-phosphate reductase, found in Saccharophagus degradans (strain 2-40 / ATCC 43961 / DSM 17024).